Consider the following 92-residue polypeptide: Small ribosomal subunit protein bS20 (92 aa).

Residues 1–11 (MANIKSQKKRI) show a composition bias toward basic residues. Residues 1–22 (MANIKSQKKRIRQNEKARLRNK) form a disordered region.

Belongs to the bacterial ribosomal protein bS20 family.

Binds directly to 16S ribosomal RNA. The polypeptide is Small ribosomal subunit protein bS20 (Thermobifida fusca (strain YX)).